The sequence spans 43 residues: Protein PsbN (43 aa).

Residues 5 to 27 (TLVAIPISCLLVSFTGYALYTAF) traverse the membrane as a helical segment.

Belongs to the PsbN family.

The protein localises to the plastid. Its subcellular location is the chloroplast thylakoid membrane. In terms of biological role, may play a role in photosystem I and II biogenesis. The polypeptide is Protein PsbN (Sphagnum cuspidatum (Bog moss)).